Here is a 298-residue protein sequence, read N- to C-terminus: N-acetylmuramic acid 6-phosphate etherase (298 aa).

The 164-residue stretch at 55 to 218 folds into the SIS domain; it reads ASKRYREGGR…STGVMIKQGK (164 aa). Glutamate 83 serves as the catalytic Proton donor. Glutamate 114 is a catalytic residue.

The protein belongs to the GCKR-like family. MurNAc-6-P etherase subfamily. Homodimer.

The catalysed reaction is N-acetyl-D-muramate 6-phosphate + H2O = N-acetyl-D-glucosamine 6-phosphate + (R)-lactate. It functions in the pathway amino-sugar metabolism; N-acetylmuramate degradation. Its function is as follows. Specifically catalyzes the cleavage of the D-lactyl ether substituent of MurNAc 6-phosphate, producing GlcNAc 6-phosphate and D-lactate. The protein is N-acetylmuramic acid 6-phosphate etherase of Lactobacillus johnsonii (strain CNCM I-12250 / La1 / NCC 533).